A 201-amino-acid chain; its full sequence is Thylakoid membrane protein slr1796 (201 aa).

A helical membrane pass occupies residues 16 to 36 (FLIVSLAFAMLLLGIWGTLPF).

The protein resides in the cellular thylakoid membrane. The sequence is that of Thylakoid membrane protein slr1796 from Synechocystis sp. (strain ATCC 27184 / PCC 6803 / Kazusa).